Consider the following 290-residue polypeptide: Putative phosphatase MPN_427 (290 aa).

Catalysis depends on Asp16, which acts as the Nucleophile. Asp16 contributes to the Mg(2+) binding site. A phosphate-binding site is contributed by Leu17. Residue Asp18 participates in Mg(2+) binding. Phosphate contacts are provided by residues 53-54 (TG) and Lys216. Positions 239 and 240 each coordinate Mg(2+). Asn242 serves as a coordination point for phosphate.

Belongs to the HAD-like hydrolase superfamily. Cof family. Mg(2+) serves as cofactor.

The sequence is that of Putative phosphatase MPN_427 from Mycoplasma pneumoniae (strain ATCC 29342 / M129 / Subtype 1) (Mycoplasmoides pneumoniae).